The following is a 126-amino-acid chain: Large ribosomal subunit protein bL12 (126 aa).

Belongs to the bacterial ribosomal protein bL12 family. In terms of assembly, homodimer. Part of the ribosomal stalk of the 50S ribosomal subunit. Forms a multimeric L10(L12)X complex, where L10 forms an elongated spine to which 2 to 4 L12 dimers bind in a sequential fashion. Binds GTP-bound translation factors.

Its function is as follows. Forms part of the ribosomal stalk which helps the ribosome interact with GTP-bound translation factors. Is thus essential for accurate translation. In Acidovorax ebreus (strain TPSY) (Diaphorobacter sp. (strain TPSY)), this protein is Large ribosomal subunit protein bL12.